Here is a 394-residue protein sequence, read N- to C-terminus: Cell division protein FtsZ (394 aa).

GTP-binding positions include 21 to 25, Arg29, 108 to 110, Glu139, Arg143, Asn166, and Asp187; these read GGGNN and GTG. The disordered stretch occupies residues 317–394; sequence DKPSSQGRKA…EERRSRRTRR (78 aa). Composition is skewed to low complexity over residues 328-346 and 353-364; these read STGFGSSVNSSSNHQSGAS and SAHTSHSQSSES. A compositionally biased stretch (basic and acidic residues) spans 365-388; the sequence is VSERSHTTKDDDIPSFIRNREERR.

This sequence belongs to the FtsZ family. In terms of assembly, homodimer. Polymerizes to form a dynamic ring structure in a strictly GTP-dependent manner. Interacts directly with several other division proteins.

It localises to the cytoplasm. In terms of biological role, essential cell division protein that forms a contractile ring structure (Z ring) at the future cell division site. The regulation of the ring assembly controls the timing and the location of cell division. One of the functions of the FtsZ ring is to recruit other cell division proteins to the septum to produce a new cell wall between the dividing cells. Binds GTP and shows GTPase activity. This is Cell division protein FtsZ from Staphylococcus epidermidis (strain ATCC 35984 / DSM 28319 / BCRC 17069 / CCUG 31568 / BM 3577 / RP62A).